Here is a 105-residue protein sequence, read N- to C-terminus: Small ribosomal subunit protein bS6 (105 aa).

The protein belongs to the bacterial ribosomal protein bS6 family.

In terms of biological role, binds together with bS18 to 16S ribosomal RNA. This chain is Small ribosomal subunit protein bS6, found in Lawsonia intracellularis (strain PHE/MN1-00).